We begin with the raw amino-acid sequence, 490 residues long: Homoserine O-acetyltransferase (490 aa).

The AB hydrolase-1 domain maps to 47–353; it reads NAILVCHALT…SQFGHDAFLI (307 aa). The Nucleophile role is filled by S152. Residue R221 participates in substrate binding. Residues D315 and H348 contribute to the active site. Substrate is bound at residue D349. CBS domains lie at 375–432 and 436–490; these read MNTQ…YTSL and MSSQ…GRGP.

It belongs to the AB hydrolase superfamily. MetX family. As to quaternary structure, homodimer.

Its subcellular location is the cytoplasm. It catalyses the reaction L-homoserine + acetyl-CoA = O-acetyl-L-homoserine + CoA. The protein operates within amino-acid biosynthesis; L-methionine biosynthesis via de novo pathway; O-acetyl-L-homoserine from L-homoserine: step 1/1. Transfers an acetyl group from acetyl-CoA to L-homoserine, forming acetyl-L-homoserine. The chain is Homoserine O-acetyltransferase from Methanosphaerula palustris (strain ATCC BAA-1556 / DSM 19958 / E1-9c).